Reading from the N-terminus, the 530-residue chain is Membrane-associated transporter protein (530 aa).

Over 1–46 (MGSNSGQAGRHIYKSLADDGPFDSVEPPKRPTSRLIMHSMAMFGRE) the chain is Cytoplasmic. The chain crosses the membrane as a helical span at residues 47 to 67 (FCYAVEAAYVTPVLLSVGLPS). Position 68 (Ser68) is a topological domain, extracellular. The helical transmembrane segment at 69 to 89 (LYSIVWFLSPILGFLLQPVVG) threads the bilayer. At 90–110 (SASDHCRSRWGRRRPYILTLG) the chain is on the cytoplasmic side. A helical membrane pass occupies residues 111-131 (VMMLVGMALYLNGATVVAALI). The Extracellular segment spans residues 132 to 138 (ANPRRKL). Residues 139 to 159 (VWAISVTMIGVVLFDFAADFI) traverse the membrane as a helical segment. The Cytoplasmic portion of the chain corresponds to 160–184 (DGPIKAYLFDVCSHQDKEKGLHYHA). The helical transmembrane segment at 185 to 205 (LFTGFGGALGYLLGAIDWAHL) threads the bilayer. The Extracellular portion of the chain corresponds to 206–216 (ELGRLLGTEFQ). A helical transmembrane segment spans residues 217-237 (VMFFFSALVLTLCFTVHLCSI). Residues 238–318 (SEAPLTEVAK…ALVNMPPHYR (81 aa)) lie on the Cytoplasmic side of the membrane. The helical transmembrane segment at 319 to 339 (YLCISHLIGWTAFLSNMLFFT) threads the bilayer. The Extracellular segment spans residues 340-366 (DFMGQIVYRGDPYSAHNSTEFLIYERG). Asn356 carries N-linked (GlcNAc...) asparagine glycosylation. The chain crosses the membrane as a helical span at residues 367-387 (VEVGCWGLCINSVFSSLYSYF). The Cytoplasmic portion of the chain corresponds to 388–398 (QKVLVSYIGLK). The helical transmembrane segment at 399–419 (GLYFTGYLLFGLGTGFIGLFP) threads the bilayer. The Extracellular portion of the chain corresponds to 420-425 (NVYSTL). A helical membrane pass occupies residues 426-446 (VLCSLFGVMSSTLYTVPFNLI). The Cytoplasmic portion of the chain corresponds to 447-477 (TEYHREEEKERQQAPGGDPDNSVRGKGMDCA). Residues 478-498 (TLTCMVQLAQILVGGGLGFLV) traverse the membrane as a helical segment. Over 499–504 (NTAGTV) the chain is Extracellular. The helical transmembrane segment at 505-525 (VVVVITASAVALIGCCFVALF) threads the bilayer. Residues 526-530 (VRYVD) are Cytoplasmic-facing.

The protein belongs to the glycoside-pentoside-hexuronide (GPH) cation symporter transporter (TC 2.A.2) family. As to quaternary structure, interacts with TYRP1. Expressed in mature melanocytes.

It is found in the melanosome membrane. The enzyme catalyses sucrose(out) + H(+)(out) = sucrose(in) + H(+)(in). It carries out the reaction D-glucose(out) + H(+)(out) = D-glucose(in) + H(+)(in). Proton-associated glucose and sucrose transporter. May be able to transport also fructose. Expressed at a late melanosome maturation stage where functions as proton/glucose exporter which increase lumenal pH by decreasing glycolysis. Regulates melanogenesis by maintaining melanosome neutralization that is initially initiated by transient OCA2 and required for a proper function of the tyrosinase TYR. The protein is Membrane-associated transporter protein of Homo sapiens (Human).